A 170-amino-acid polypeptide reads, in one-letter code: MPLTRDPFQNPALDKDDSYLGKSRASKKLPYKNPTHLAQQQEPWCRLSSTPTITSMKRDGFFFYSEIPKDDLDFRLAALYNHHTGTFKNKSEILTHQETIQDTRRIKTQFPGEFLPAPQPPLITSRANIRHWINPKKESIHSIQGSIVSPHTAATNGGYSRKNDGGFFST.

Disordered regions lie at residues 1 to 37 and 151 to 170; these read MPLTRDPFQNPALDKDDSYLGKSRASKKLPYKNPTHL and HTAATNGGYSRKNDGGFFST.

Microtubule inner protein component of sperm flagellar doublet microtubules. Expressed in trachea multiciliated cells.

It localises to the cytoplasm. Its subcellular location is the cytoskeleton. The protein localises to the cilium axoneme. The protein resides in the flagellum axoneme. In terms of biological role, microtubule inner protein (MIP) part of the dynein-decorated doublet microtubules (DMTs) in cilia axoneme, which is required for motile cilia beating. May play an important role for the maintenance of myelin-axon integrity. May affect intracellular Ca(2+) homeostasis. This Bos taurus (Bovine) protein is Cilia- and flagella-associated protein 276.